We begin with the raw amino-acid sequence, 400 residues long: Subtilisin-like protease 7 (400 aa).

The signal sequence occupies residues 1–20 (MGFITKAIPLALAAASVING). Positions 21–119 (AEIMETRAGV…IERDARVQIN (99 aa)) are excised as a propeptide. Positions 36 to 118 (KYIVVMNDGM…YIERDARVQI (83 aa)) constitute an Inhibitor I9 domain. Residue Asn58 is glycosylated (N-linked (GlcNAc...) asparagine). The 272-residue stretch at 129–400 (SWGLARVGSK…SKLINNGSGM (272 aa)) folds into the Peptidase S8 domain. Active-site charge relay system residues include Asp161 and His192. Residues Asn222 and Asn252 are each glycosylated (N-linked (GlcNAc...) asparagine). Catalysis depends on Ser346, which acts as the Charge relay system. N-linked (GlcNAc...) asparagine glycosylation occurs at Asn396.

This sequence belongs to the peptidase S8 family.

The protein localises to the secreted. Functionally, secreted subtilisin-like serine protease with keratinolytic activity that contributes to pathogenicity. In Trichophyton verrucosum (Cattle ringworm fungus), this protein is Subtilisin-like protease 7 (SUB7).